We begin with the raw amino-acid sequence, 101 residues long: uncharacterized protein (101 aa).

The segment at 39 to 74 (CDERHGRPLPHSQESQHGSATSKKAVRGTADTAPLE) is disordered. Residues 50–60 (SQESQHGSATS) are compositionally biased toward polar residues.

This is an uncharacterized protein from Homo sapiens (Human).